Consider the following 113-residue polypeptide: U11-theraphotoxin-Hhn1a (113 aa).

Positions 1–21 (MNTVRVTFLLVFVLAVSLGQA) are cleaved as a signal peptide. A propeptide spanning residues 22 to 74 (DKDENRMEMQEKTEQGESYLDFAENLLLQKLEELEAKLLEEDSEESRNSRQKR) is cleaved from the precursor. Intrachain disulfides connect C75–C90, C82–C95, and C89–C110.

This sequence belongs to the neurotoxin 14 (magi-1) family. 01 (HNTX-16) subfamily. In terms of tissue distribution, expressed by the venom gland.

It is found in the secreted. In terms of biological role, probable ion channel inhibitor. This Cyriopagopus hainanus (Chinese bird spider) protein is U11-theraphotoxin-Hhn1a.